We begin with the raw amino-acid sequence, 504 residues long: Maturase K (504 aa).

The protein belongs to the intron maturase 2 family. MatK subfamily.

Its subcellular location is the plastid. The protein resides in the chloroplast. In terms of biological role, usually encoded in the trnK tRNA gene intron. Probably assists in splicing its own and other chloroplast group II introns. In Adansonia digitata (Baobab tree), this protein is Maturase K.